The chain runs to 145 residues: Putative sterol 14-demethylase-like protein (145 aa).

The chain crosses the membrane as a helical span at residues 5–25; sequence YYTLLKTSVAIIIVFVVAKLI.

Belongs to the cytochrome P450 family. Expressed specifically in roots.

The protein resides in the membrane. The chain is Putative sterol 14-demethylase-like protein (CYP51G2) from Arabidopsis thaliana (Mouse-ear cress).